Here is a 339-residue protein sequence, read N- to C-terminus: Delta(9)-fatty-acid desaturase fat-6 (339 aa).

The next 4 helical transmembrane spans lie at 52 to 72, 77 to 97, 195 to 215, and 219 to 241; these read VALF…LIFE, TVIF…AGAH, YFPL…VYFW, and AFIA…TWCI.

This sequence belongs to the fatty acid desaturase type 1 family. Expressed in the intestine in adult worms and in all four larval stages. Additional expression in the hypodermis in all life stages.

The protein localises to the membrane. It catalyses the reaction octadecanoyl-CoA + 2 Fe(II)-[cytochrome b5] + O2 + 2 H(+) = (9Z)-octadecenoyl-CoA + 2 Fe(III)-[cytochrome b5] + 2 H2O. The catalysed reaction is hexadecanoyl-CoA + 2 Fe(II)-[cytochrome b5] + O2 + 2 H(+) = (9Z)-hexadecenoyl-CoA + 2 Fe(III)-[cytochrome b5] + 2 H2O. The enzyme catalyses heptadecanoyl-CoA + 2 Fe(II)-[cytochrome b5] + O2 + 2 H(+) = (9Z)-heptadecenoyl-CoA + 2 Fe(III)-[cytochrome b5] + 2 H2O. It carries out the reaction (11E)-octadecenoyl-CoA + 2 Fe(II)-[cytochrome b5] + O2 + 2 H(+) = (9Z,11E)-octadecadienoyl-CoA + 2 Fe(III)-[cytochrome b5] + 2 H2O. Its pathway is lipid metabolism; monounsaturated fatty acid biosynthesis. It participates in lipid metabolism; fatty acid metabolism. Functionally, delta(9)-fatty acid desaturase that acts preferentially on stearoyl-CoA (octadecanoyl-CoA) producing the monounsaturated oleoyl-CoA ((9Z)-octadecenoyl-CoA), one of the most abundant monounsaturated fatty acid in Caenorhabditis elegans phospholipids and triacylglycerols. Also acts on palmitoyl-CoA (hexadecanoyl-CoA), heptadecanoyl-CoA and (11E)-octadecenoyl-CoA (trans-vaccenoyl-CoA), the monounsaturated fatty acids (MUFAs) produced are further used as substrates to synthesize polyunsaturated fatty acids (PUFAs) by several other desaturases and elongases. Unlike plants, Caenorhabditis elegans desaturases seem to use fatty acyl-CoAs as substrates. This chain is Delta(9)-fatty-acid desaturase fat-6 (fat-6), found in Caenorhabditis elegans.